We begin with the raw amino-acid sequence, 176 residues long: Adenylyl-sulfate kinase (176 aa).

An ATP-binding site is contributed by 12–19 (GLSGAGKS). The active-site Phosphoserine intermediate is the serine 86.

The protein belongs to the APS kinase family.

It carries out the reaction adenosine 5'-phosphosulfate + ATP = 3'-phosphoadenylyl sulfate + ADP + H(+). It participates in sulfur metabolism; hydrogen sulfide biosynthesis; sulfite from sulfate: step 2/3. Its function is as follows. Catalyzes the synthesis of activated sulfate. In Gloeothece citriformis (strain PCC 7424) (Cyanothece sp. (strain PCC 7424)), this protein is Adenylyl-sulfate kinase.